Reading from the N-terminus, the 424-residue chain is CinA-like protein (424 aa).

It belongs to the CinA family.

This chain is CinA-like protein, found in Shewanella frigidimarina (strain NCIMB 400).